Reading from the N-terminus, the 256-residue chain is Small ribosomal subunit protein uS2 (256 aa).

The protein belongs to the universal ribosomal protein uS2 family.

This Brucella melitensis biotype 1 (strain ATCC 23456 / CCUG 17765 / NCTC 10094 / 16M) protein is Small ribosomal subunit protein uS2.